Reading from the N-terminus, the 430-residue chain is UDP-N-acetylglucosamine 1-carboxyvinyltransferase (430 aa).

Phosphoenolpyruvate is bound at residue 22–23; sequence KN. Arginine 102 is a UDP-N-acetyl-alpha-D-glucosamine binding site. Catalysis depends on cysteine 126, which acts as the Proton donor. Cysteine 126 carries the post-translational modification 2-(S-cysteinyl)pyruvic acid O-phosphothioketal. UDP-N-acetyl-alpha-D-glucosamine-binding positions include 131–135, 172–175, aspartate 317, and isoleucine 339; these read RPVDL and KVSV.

This sequence belongs to the EPSP synthase family. MurA subfamily.

Its subcellular location is the cytoplasm. It catalyses the reaction phosphoenolpyruvate + UDP-N-acetyl-alpha-D-glucosamine = UDP-N-acetyl-3-O-(1-carboxyvinyl)-alpha-D-glucosamine + phosphate. It functions in the pathway cell wall biogenesis; peptidoglycan biosynthesis. In terms of biological role, cell wall formation. Adds enolpyruvyl to UDP-N-acetylglucosamine. This Agrobacterium fabrum (strain C58 / ATCC 33970) (Agrobacterium tumefaciens (strain C58)) protein is UDP-N-acetylglucosamine 1-carboxyvinyltransferase.